A 956-amino-acid polypeptide reads, in one-letter code: DNA polymerase I (956 aa).

The 5'-3' exonuclease domain maps to 209–296 (VTVRQWVDYR…VTDLPLDIEF (88 aa)).

Belongs to the DNA polymerase type-A family. Single-chain monomer with multiple functions.

It carries out the reaction DNA(n) + a 2'-deoxyribonucleoside 5'-triphosphate = DNA(n+1) + diphosphate. Its function is as follows. A DNA polymerase, required for DNA repair after DNA damage induced by ionizing radiation (IR); this is not the major DNA polymerase. Following severe irradiation (7 kGy of gamma irradiation) genomic DNA is fragmented. DNA is progressively degraded for the first 1.5 hours after IR, in a step promoted by RecA and counterbalanced by DNA Pol I and Pol III, followed by massive DNA synthesis and genome reassembly in the next hour. Optimal priming of DNA synthesis requires both RecA and RadA, Pol III initiates DNA synthesis while both Pol I and Pol III are required for its continuation. May also have 5'-3' exonuclease activity. The sequence is that of DNA polymerase I (polA) from Deinococcus radiodurans (strain ATCC 13939 / DSM 20539 / JCM 16871 / CCUG 27074 / LMG 4051 / NBRC 15346 / NCIMB 9279 / VKM B-1422 / R1).